The following is a 386-amino-acid chain: Glyceraldehyde-3-phosphate dehydrogenase, chloroplastic (386 aa).

The transit peptide at 1-45 directs the protein to the chloroplast; that stretch reads MAYFKAVAYLAALASAAAFNPGSSFVPRLNAPATQPKAAKMTGPT. Residues 58–59 and arginine 125 contribute to the NADP(+) site; that span reads RI. Residues 197 to 199, threonine 228, 257 to 258, and arginine 280 each bind D-glyceraldehyde 3-phosphate; these read SCT and TG. Residue cysteine 198 is the Nucleophile of the active site. Residue asparagine 362 coordinates NADP(+).

Belongs to the glyceraldehyde-3-phosphate dehydrogenase family. As to quaternary structure, homotetramer.

It is found in the plastid. The protein localises to the chloroplast. The enzyme catalyses D-glyceraldehyde 3-phosphate + phosphate + NADP(+) = (2R)-3-phospho-glyceroyl phosphate + NADPH + H(+). The catalysed reaction is D-glyceraldehyde 3-phosphate + phosphate + NAD(+) = (2R)-3-phospho-glyceroyl phosphate + NADH + H(+). It participates in carbohydrate biosynthesis; Calvin cycle. The sequence is that of Glyceraldehyde-3-phosphate dehydrogenase, chloroplastic (GAPC1) from Guillardia theta (Cryptophyte).